A 296-amino-acid polypeptide reads, in one-letter code: Urease accessory protein UreD (296 aa).

Belongs to the UreD family. As to quaternary structure, ureD, UreF and UreG form a complex that acts as a GTP-hydrolysis-dependent molecular chaperone, activating the urease apoprotein by helping to assemble the nickel containing metallocenter of UreC. The UreE protein probably delivers the nickel.

It is found in the cytoplasm. Required for maturation of urease via the functional incorporation of the urease nickel metallocenter. This is Urease accessory protein UreD from Synechococcus sp. (strain CC9311).